We begin with the raw amino-acid sequence, 215 residues long: CASP-like protein 1U3 (215 aa).

The Cytoplasmic segment spans residues 1–13 (MHDEEKKEPKWVT). The chain crosses the membrane as a helical span at residues 14–34 (AVSIAGRIAGMGLAVAAAVLM). The Extracellular segment spans residues 35 to 68 (STASQCTVYYAAPAASAYGGAARARTVTYSDFPP). Residues 69–89 (FVFLVGAASIAAFLEAIAIFL) form a helical membrane-spanning segment. Residues 90–105 (VVWKKGKDKTTKVLMP) are Cytoplasmic-facing. The chain crosses the membrane as a helical span at residues 106–126 (LLGVAVPALLYSATGAAFAAV). The Extracellular segment spans residues 127–161 (SDMSYCSANGKRVSICAGSAAAGGGVSGGTNFCSQ). Residues 162 to 182 (VHIAVYLSLAAAVAVSVAEVV) traverse the membrane as a helical segment. At 183-215 (RGLGGSASGGGSDSDSSSSSESGGCDHGCHHKH) the chain is on the cytoplasmic side. The interval 187-215 (GSASGGGSDSDSSSSSESGGCDHGCHHKH) is disordered. Low complexity predominate over residues 195 to 205 (DSDSSSSSESG).

It belongs to the Casparian strip membrane proteins (CASP) family. In terms of assembly, homodimer and heterodimers.

Its subcellular location is the cell membrane. In Sorghum bicolor (Sorghum), this protein is CASP-like protein 1U3.